A 262-amino-acid chain; its full sequence is Type III pantothenate kinase (262 aa).

6–13 is a binding site for ATP; sequence DVGNTNTV. Substrate is bound by residues Y101 and 108-111; that span reads GADR. The Proton acceptor role is filled by D110. D130 contributes to the K(+) binding site. T133 is an ATP binding site. T186 is a binding site for substrate.

Belongs to the type III pantothenate kinase family. As to quaternary structure, homodimer. It depends on NH4(+) as a cofactor. Requires K(+) as cofactor.

The protein localises to the cytoplasm. It catalyses the reaction (R)-pantothenate + ATP = (R)-4'-phosphopantothenate + ADP + H(+). Its pathway is cofactor biosynthesis; coenzyme A biosynthesis; CoA from (R)-pantothenate: step 1/5. Its function is as follows. Catalyzes the phosphorylation of pantothenate (Pan), the first step in CoA biosynthesis. This chain is Type III pantothenate kinase, found in Desulforapulum autotrophicum (strain ATCC 43914 / DSM 3382 / VKM B-1955 / HRM2) (Desulfobacterium autotrophicum).